The following is a 60-amino-acid chain: Homeobox protein engrailed-like B (60 aa).

Residues 1–41 (VEQLQRLKSEFGASRYLTEARRQALAQELRLNEAQIKIWFQ) constitute a DNA-binding region (homeobox).

This sequence belongs to the engrailed homeobox family.

It is found in the nucleus. The chain is Homeobox protein engrailed-like B from Myxine glutinosa (Atlantic hagfish).